Reading from the N-terminus, the 113-residue chain is Beta-microseminoprotein (113 aa).

The first 20 residues, 1 to 20 (MKARLGSLLVLATLVTASNA), serve as a signal peptide directing secretion. Disulfide bonds link C22–C69, C38–C61, C56–C92, C59–C68, and C83–C106.

Belongs to the beta-microseminoprotein family. As to quaternary structure, homodimer; Interacts with PI16.

Its subcellular location is the secreted. The sequence is that of Beta-microseminoprotein (Msmb) from Rattus norvegicus (Rat).